Here is a 611-residue protein sequence, read N- to C-terminus: Leucine aminopeptidase 2 (611 aa).

A peptide contacts are provided by residues 135-137 (QCQ) and 265-270 (PYGGME). His-294 lines the Zn(2+) pocket. Glu-295 serves as the catalytic Proton acceptor. Zn(2+) contacts are provided by His-298 and Glu-317. The Proton donor role is filled by Tyr-383.

Belongs to the peptidase M1 family. The cofactor is Zn(2+).

It is found in the cytoplasm. The protein resides in the nucleus. It carries out the reaction an epoxide + H2O = an ethanediol. Its function is as follows. Aminopeptidase that preferentially cleaves di- and tripeptides. Also has low epoxide hydrolase activity (in vitro). Can hydrolyze the epoxide leukotriene LTA(4) but it forms preferentially 5,6-dihydroxy-7,9,11,14-eicosatetraenoic acid rather than the cytokine leukotriene B(4) as the product compared to the homologous mammalian enzyme (in vitro). The sequence is that of Leucine aminopeptidase 2 from Chaetomium globosum (strain ATCC 6205 / CBS 148.51 / DSM 1962 / NBRC 6347 / NRRL 1970) (Soil fungus).